A 262-amino-acid chain; its full sequence is UPF0739 protein C1orf74 homolog (262 aa).

This sequence belongs to the UPF0739 family.

The polypeptide is UPF0739 protein C1orf74 homolog (Xenopus laevis (African clawed frog)).